The chain runs to 375 residues: MQVIVALAALSSLAAPALGFSIPRGVPVSQSMIDVKLSAAGNSMVKATITNNGDRALNLLKFHTIMDSNPTRKVTIESQDGKEVQFTGMMPRYKHTDLKPTYFISLPPKGTVEHSFDIASTHDLSRGGKFTLKAEGMVPLAEENGTTITGAAKYNSNELHMDIDGNKAASVERAMGIVKRSGPLTRIGKRTSIDMQSCSNRQELQALTAALRASAQLSSMAAQAVQQNQEKYMEYFKDPQYAQTVQSRFQSVAQESSSTSGGGTTYHCTDLMNGCEQGVLAYTLPSQNEVFNCPIYYSDLPPLSNECHAQDQATTTLHELTHNPAVQEPFCEDNGYGYERATALSAEKAVQNADSYALFANGKFLPMSSMLVTQD.

A signal peptide spans 1–19; that stretch reads MQVIVALAALSSLAAPALG. Residues 20 to 190 constitute a propeptide that is removed on maturation; sequence FSIPRGVPVS…SGPLTRIGKR (171 aa). 2 disulfides stabilise this stretch: C198–C268 and C275–C293. H318 contributes to the Zn(2+) binding site. E319 is an active-site residue. Zn(2+) contacts are provided by H322 and D333.

It belongs to the peptidase M35 family. Requires Zn(2+) as cofactor.

The protein resides in the secreted. It catalyses the reaction Preferential cleavage of bonds with hydrophobic residues in P1'. Also 3-Asn-|-Gln-4 and 8-Gly-|-Ser-9 bonds in insulin B chain.. Functionally, secreted metalloproteinase that allows assimilation of proteinaceous substrates. Shows high activities on basic nuclear substrates such as histone and protamine. May be involved in virulence. In Arthroderma gypseum (strain ATCC MYA-4604 / CBS 118893) (Microsporum gypseum), this protein is Neutral protease 2 homolog MGYG_00813.